Reading from the N-terminus, the 207-residue chain is Serotonin N-acetyltransferase (207 aa).

Residues 1–28 (MSTQSTHPLKPEAPRLPPGIPESPSCQR) are disordered. T31 bears the Phosphothreonine; by PKA mark. Positions 35 to 194 (SEFRCLTPED…SLTFMELHCS (160 aa)) constitute an N-acetyltransferase domain. L124 provides a ligand contact to substrate. Acetyl-CoA is bound by residues 124-126 (LAV) and 132-137 (QQGRGP). M159 is a binding site for substrate. 168-170 (YER) contributes to the acetyl-CoA binding site. S205 carries the post-translational modification Phosphoserine.

It belongs to the acetyltransferase family. AANAT subfamily. As to quaternary structure, monomer. Interacts with several 14-3-3 proteins, including YWHAB, YWHAE, YWHAG and YWHAZ, preferentially when phosphorylated at Thr-31. Phosphorylation on Ser-205 also allows binding to YWHAZ, but with lower affinity. The interaction with YWHAZ considerably increases affinity for arylalkylamines and acetyl-CoA and protects the enzyme from dephosphorylation and proteasomal degradation. It may also prevent thiol-dependent inactivation. In terms of processing, cAMP-dependent phosphorylation on both N-terminal Thr-31 and C-terminal Ser-205 regulates AANAT activity by promoting interaction with 14-3-3 proteins. In terms of tissue distribution, highly expressed in pineal gland and at lower levels in the retina. Weak expression in several brain regions and in the pituitary gland.

It localises to the cytoplasm. The enzyme catalyses a 2-arylethylamine + acetyl-CoA = an N-acetyl-2-arylethylamine + CoA + H(+). It functions in the pathway aromatic compound metabolism; melatonin biosynthesis; melatonin from serotonin: step 1/2. Functionally, controls the night/day rhythm of melatonin production in the pineal gland. Catalyzes the N-acetylation of serotonin into N-acetylserotonin, the penultimate step in the synthesis of melatonin. This is Serotonin N-acetyltransferase (AANAT) from Homo sapiens (Human).